Here is a 164-residue protein sequence, read N- to C-terminus: uncharacterized protein (164 aa).

A signal peptide spans 1–18; that stretch reads MILILTIIVGFLIYFVTA. The N-linked (GlcNAc...) asparagine; by host glycan is linked to N88.

The protein belongs to the IIV-6 357R family.

This is an uncharacterized protein from Acheta domesticus (House cricket).